Reading from the N-terminus, the 910-residue chain is Protein translocase subunit SecA (910 aa).

Residues glutamine 87, 105-109 (GEGKT), and aspartate 501 contribute to the ATP site. Cysteine 894, cysteine 896, cysteine 905, and histidine 906 together coordinate Zn(2+).

The protein belongs to the SecA family. In terms of assembly, monomer and homodimer. Part of the essential Sec protein translocation apparatus which comprises SecA, SecYEG and auxiliary proteins SecDF-YajC and YidC. The cofactor is Zn(2+).

Its subcellular location is the cell inner membrane. It localises to the cytoplasm. It carries out the reaction ATP + H2O + cellular proteinSide 1 = ADP + phosphate + cellular proteinSide 2.. In terms of biological role, part of the Sec protein translocase complex. Interacts with the SecYEG preprotein conducting channel. Has a central role in coupling the hydrolysis of ATP to the transfer of proteins into and across the cell membrane, serving both as a receptor for the preprotein-SecB complex and as an ATP-driven molecular motor driving the stepwise translocation of polypeptide chains across the membrane. This Acidiphilium cryptum (strain JF-5) protein is Protein translocase subunit SecA.